The sequence spans 581 residues: MADADSANPQFLEWVKEWLDLARERNSKGVTTYRTAYNSLKACPISFEHPAQLQQLKGFGPKLCERLEQQLKKHCEQNGLPMPPHPRSRKAAPVTSDENGEGSSKPAKKARKQKAYVPALRSGAFALVVGLSTLDEDTATGMTKAELIEVAQPYCDASFSAPSDPTKFYTAWNSMKTLLQKELVYERGRPLRRYALTDEGWEVAKRIKDTDHWQAEKDRTKDPTSAQPVIPNFQPGAISRQKSPSVEIAEPAQALSEYQNVVADGLTTSDDASLPNFTPILLPPGTFTVQLVLDVREVRAKTDRDYMQEELAKQGAKPIMRSMELGDAQWVAKCNDPNLLSSQGAEGDEVVLDWIVERKRLDDLIGSIKDGRFHEQKFRLQRSGVKKVIYIIEEIGMDPEVINRYAEAVRSAIASTQVVNGYFVKRTNKMDDTIRYLTRMTAMLKRTYESRSLHVIPTKVLTSQNYLPLLKHLRESISPDWYITYPAFSSLASKSESITLRDVFLKMLMTIKGVTGEKALEIQKCWKTPYDFVKAFEACGPGEQGLKRKRELVFSQTSHLVGRKKFTKPLSTKIAEVWGNT.

Residues glutamate 76–glutamine 113 form a disordered region. Residues glutamine 290–glycine 396 enclose the ERCC4 domain.

The protein belongs to the XPF family. Interacts with EME1. It depends on Mg(2+) as a cofactor.

The protein localises to the nucleus. Its function is as follows. Interacts with EME1 to form a DNA structure-specific endonuclease with substrate preference for branched DNA structures with a 5'-end at the branch nick. Typical substrates include 3'-flap structures, D-loops, replication forks and nicked Holliday junctions. May be required in mitosis for the processing of stalled or collapsed replication fork intermediates. May be required in meiosis for the repair of meiosis-specific double strand breaks subsequent to single-end invasion (SEI). The polypeptide is Crossover junction endonuclease MUS81 (MUS81) (Gibberella zeae (strain ATCC MYA-4620 / CBS 123657 / FGSC 9075 / NRRL 31084 / PH-1) (Wheat head blight fungus)).